We begin with the raw amino-acid sequence, 65 residues long: Large ribosomal subunit protein bL35 (65 aa).

The protein belongs to the bacterial ribosomal protein bL35 family.

This Porphyromonas gingivalis (strain ATCC 33277 / DSM 20709 / CIP 103683 / JCM 12257 / NCTC 11834 / 2561) protein is Large ribosomal subunit protein bL35.